Consider the following 618-residue polypeptide: Beta-xylosidase (618 aa).

Disordered regions lie at residues 76–100 (ERDR…QEES) and 463–509 (LEPQ…PPIQ).

Belongs to the glycosyl hydrolase 52 family.

Its subcellular location is the secreted. The enzyme catalyses Hydrolysis of (1-&gt;4)-beta-D-xylans, to remove successive D-xylose residues from the non-reducing termini.. It functions in the pathway glycan degradation; xylan degradation. The polypeptide is Beta-xylosidase (xylA) (Geobacillus stearothermophilus (Bacillus stearothermophilus)).